The sequence spans 305 residues: Translation initiation factor eIF2B subunit alpha (305 aa).

Residue S2 is modified to N-acetylserine. Residue T291 is modified to Phosphothreonine.

Belongs to the eIF-2B alpha/beta/delta subunits family. As to quaternary structure, component of the translation initiation factor 2B (eIF2B) complex which is a heterodecamer of two sets of five different subunits: alpha, beta, gamma, delta and epsilon. Subunits alpha, beta and delta comprise a regulatory subcomplex and subunits epsilon and gamma comprise a catalytic subcomplex. Within the complex, the hexameric regulatory complex resides at the center, with the two heterodimeric catalytic subcomplexes bound on opposite sides.

It localises to the cytoplasm. The protein localises to the cytosol. Functionally, acts as a component of the translation initiation factor 2B (eIF2B) complex, which catalyzes the exchange of GDP for GTP on the eukaryotic initiation factor 2 (eIF2) complex gamma subunit. Its guanine nucleotide exchange factor activity is repressed when bound to eIF2 complex phosphorylated on the alpha subunit, thereby limiting the amount of methionyl-initiator methionine tRNA available to the ribosome and consequently global translation is repressed. It activates the translation of GCN4 in response to low amino acid, carbon, or purine availability, by suppressing the inhibitory effects of multiple uORFs present in the leader of GCN4 mRNA. It may promote either repression or activation of GCN4 expression depending on amino acid availability. Modulation of GCN3 regulatory function in response to amino acid availability occurs post-translationally. This is Translation initiation factor eIF2B subunit alpha from Saccharomyces cerevisiae (strain ATCC 204508 / S288c) (Baker's yeast).